Reading from the N-terminus, the 923-residue chain is DNA gyrase subunit A (923 aa).

In terms of domain architecture, Topo IIA-type catalytic spans 34 to 534 (LPDARDGLKP…SQVDLTIADL (501 aa)). Tyr-122 functions as the O-(5'-phospho-DNA)-tyrosine intermediate in the catalytic mechanism. A GyrA-box motif is present at residues 561 to 567 (QRRGGKG). The interval 881–923 (ERVQEPSGGDDEDLPEGEEAAESLGESAESESEPAAEAEGNEE) is disordered. Acidic residues-rich tracts occupy residues 888–901 (GGDDEDLPEGEEAA) and 908–923 (AESESEPAAEAEGNEE).

This sequence belongs to the type II topoisomerase GyrA/ParC subunit family. In terms of assembly, heterotetramer, composed of two GyrA and two GyrB chains. In the heterotetramer, GyrA contains the active site tyrosine that forms a transient covalent intermediate with DNA, while GyrB binds cofactors and catalyzes ATP hydrolysis.

It localises to the cytoplasm. The catalysed reaction is ATP-dependent breakage, passage and rejoining of double-stranded DNA.. In terms of biological role, a type II topoisomerase that negatively supercoils closed circular double-stranded (ds) DNA in an ATP-dependent manner to modulate DNA topology and maintain chromosomes in an underwound state. Negative supercoiling favors strand separation, and DNA replication, transcription, recombination and repair, all of which involve strand separation. Also able to catalyze the interconversion of other topological isomers of dsDNA rings, including catenanes and knotted rings. Type II topoisomerases break and join 2 DNA strands simultaneously in an ATP-dependent manner. This Pseudomonas aeruginosa (strain ATCC 15692 / DSM 22644 / CIP 104116 / JCM 14847 / LMG 12228 / 1C / PRS 101 / PAO1) protein is DNA gyrase subunit A.